The chain runs to 92 residues: cAMP-dependent protein kinase inhibitor beta (92 aa).

Residues 1–26 form a disordered region; sequence MGGGTSPEAQQDSVMRTDSSEMTDVE. The span at 7–26 shows a compositional bias: polar residues; the sequence is PEAQQDSVMRTDSSEMTDVE. Phosphoserine is present on Ser-56. A compositionally biased stretch (basic and acidic residues) spans 70–82; sequence EDAKTKNEEKDQG. Positions 70 to 92 are disordered; it reads EDAKTKNEEKDQGQPKTPLNEGK.

This sequence belongs to the PKI family.

Functionally, extremely potent competitive inhibitor of cAMP-dependent protein kinase activity, this protein interacts with the catalytic subunit of the enzyme after the cAMP-induced dissociation of its regulatory chains. This is cAMP-dependent protein kinase inhibitor beta (Pkib) from Mus musculus (Mouse).